A 903-amino-acid polypeptide reads, in one-letter code: Alanine--tRNA ligase (903 aa).

Positions 591, 595, 695, and 699 each coordinate Zn(2+).

Belongs to the class-II aminoacyl-tRNA synthetase family. Zn(2+) is required as a cofactor.

It is found in the cytoplasm. The catalysed reaction is tRNA(Ala) + L-alanine + ATP = L-alanyl-tRNA(Ala) + AMP + diphosphate. In terms of biological role, catalyzes the attachment of alanine to tRNA(Ala) in a two-step reaction: alanine is first activated by ATP to form Ala-AMP and then transferred to the acceptor end of tRNA(Ala). Also edits incorrectly charged Ser-tRNA(Ala) and Gly-tRNA(Ala) via its editing domain. The chain is Alanine--tRNA ligase from Methanosphaera stadtmanae (strain ATCC 43021 / DSM 3091 / JCM 11832 / MCB-3).